The following is an 84-amino-acid chain: Kappa-conotoxin-like Im11.3 (84 aa).

The signal sequence occupies residues 1–26 (MMFRLTSVSCFLLVIACLNLFQVVLT). 4 disulfide bridges follow: C29-C43, C36-C48, C42-C51, and C47-C64. The propeptide occupies 71–84 (LRPSHPLFLLLPAR).

It belongs to the conotoxin I2 superfamily. Expressed by the venom duct.

It is found in the secreted. Inhibits the vertebrate voltage-gated potassium channels Kv1.1/KCNA1 and Kv1.3/KCNA3. The sequence is that of Kappa-conotoxin-like Im11.3 from Conus imperialis (Imperial cone).